The sequence spans 151 residues: Large ribosomal subunit protein bL9 (151 aa).

It belongs to the bacterial ribosomal protein bL9 family.

Functionally, binds to the 23S rRNA. This Bordetella avium (strain 197N) protein is Large ribosomal subunit protein bL9.